The primary structure comprises 95 residues: MEGGFGSDFGGSGSGKLDPGLIMEQVKVQIAVANAQELLQRMTDKCFRKCIGKPGGSLDNSEQKCIAMCMDRYMDAWNTVSRAYNSRLQRERANM.

Residue Met1 is modified to N-acetylmethionine. At Ser7 the chain carries Phosphoserine. The short motif at 46–69 (CFRKCIGKPGGSLDNSEQKCIAMC) is the Twin CX3C motif element. 2 disulfides stabilise this stretch: Cys46–Cys69 and Cys50–Cys65. An N6-succinyllysine modification is found at Lys53.

It belongs to the small Tim family. As to quaternary structure, heterohexamer; composed of 3 copies of TIMM8 (TIMM8A or TIMM8B) and 3 copies of TIMM13, named soluble 70 kDa complex. Associates with the TIM22 complex, whose core is composed of TIMM22. As to expression, ubiquitous, with highest expression in heart, kidney, liver and skeletal muscle.

It localises to the mitochondrion inner membrane. Its function is as follows. Mitochondrial intermembrane chaperone that participates in the import and insertion of some multi-pass transmembrane proteins into the mitochondrial inner membrane. Also required for the transfer of beta-barrel precursors from the TOM complex to the sorting and assembly machinery (SAM complex) of the outer membrane. Acts as a chaperone-like protein that protects the hydrophobic precursors from aggregation and guide them through the mitochondrial intermembrane space. The TIMM8-TIMM13 complex mediates the import of proteins such as TIMM23, SLC25A12/ARALAR1 and SLC25A13/ARALAR2, while the predominant TIMM9-TIMM10 70 kDa complex mediates the import of much more proteins. This is Mitochondrial import inner membrane translocase subunit Tim13 (TIMM13) from Homo sapiens (Human).